Consider the following 1061-residue polypeptide: Calcium-transporting ATPase 4, endoplasmic reticulum-type (1061 aa).

The segment at 1 to 21 (MGKGGEDCGNKQTNSSELVKS) is disordered. Residues 1–70 (MGKGGEDCGN…NELEKPEGTS (70 aa)) are Cytoplasmic-facing. Residues 71–91 (IFKLILEQFNDTLVRILLAAA) traverse the membrane as a helical segment. At 92–115 (VISFVLAFFDGDEGGEMGITAFVE) the chain is on the lumenal side. The chain crosses the membrane as a helical span at residues 116-135 (PLVIFLILIVNAIVGIWQET). At 136–278 (NAEKALEALK…EEDTPLKKKL (143 aa)) the chain is on the cytoplasmic side. A helical transmembrane segment spans residues 279 to 298 (NEFGEVLTMIIGLICALVWL). Residues 299–327 (INVKYFLSWEYVDGWPRNFKFSFEKCTYY) are Lumenal-facing. A helical membrane pass occupies residues 328–345 (FEIAVALAVAAIPEGLPA). Ca(2+) is bound by residues Val336, Ala337, Ile339, and Glu341. At 346-786 (VITTCLALGT…GEGRSIYNNM (441 aa)) the chain is on the cytoplasmic side. The active-site 4-aspartylphosphate intermediate is Asp383. Mg(2+) is bound by residues Asp731 and Asp735. Residues 787–806 (KAFIRYMISSNIGEVASIFL) form a helical membrane-spanning segment. The Ca(2+) site is built by Asn797 and Glu800. The Lumenal segment spans residues 807–816 (TAALGIPEGM). The chain crosses the membrane as a helical span at residues 817 to 837 (IPVQLLWVNLVTDGPPATALG). Ca(2+) contacts are provided by Asn825, Thr828, and Asp829. The Cytoplasmic segment spans residues 838–857 (FNPPDKDIMKKPPRRSDDSL). The helical transmembrane segment at 858–880 (ITAWILFRYMVIGLYVGVATVGV) threads the bilayer. Over 881–950 (FIIWYTHNSF…YFQQGKIKAS (70 aa)) the chain is Lumenal. A helical transmembrane segment spans residues 951 to 970 (TLSLSVLVAIEMFNSLNALS). Glu961 serves as a coordination point for Ca(2+). Residues 971 to 983 (EDGSLVTMPPWVN) are Cytoplasmic-facing. A helical membrane pass occupies residues 984–1002 (PWLLLAMAVSFGLHFVILY). The Lumenal segment spans residues 1003–1017 (VPFLAQVFGIVPLSL). Residues 1018–1038 (NEWLLVLAVSLPVILIDEVLK) traverse the membrane as a helical segment. Residues 1039–1061 (FVGRCTSGYRYSPRTPSAKQKEE) are Cytoplasmic-facing.

It belongs to the cation transport ATPase (P-type) (TC 3.A.3) family. Type IIA subfamily.

Its subcellular location is the membrane. The enzyme catalyses Ca(2+)(in) + ATP + H2O = Ca(2+)(out) + ADP + phosphate + H(+). Its function is as follows. This magnesium-dependent enzyme catalyzes the hydrolysis of ATP coupled with the translocation of calcium from the cytosol to an endomembrane compartment. This chain is Calcium-transporting ATPase 4, endoplasmic reticulum-type (ECA4), found in Arabidopsis thaliana (Mouse-ear cress).